We begin with the raw amino-acid sequence, 88 residues long: UPF0250 protein Shal_3239 (88 aa).

The protein belongs to the UPF0250 family.

This is UPF0250 protein Shal_3239 from Shewanella halifaxensis (strain HAW-EB4).